Reading from the N-terminus, the 431-residue chain is MLDIQLLRSNTAAVAERLAARGYEFDAARFNALEEQRKAVQVKTEELQASRNSISKQIGALKGQGKHEEAQAAMDQVAQIKTDLEQAAADLDAVQKELDAWLLSIPNLPHESVPAGKDETENVEVRKVGTPREFDFEIKDHVDLGEPLGLDFEGGAKLSGARFTVMRGQIARLHRALAQFMLDTHTLQHGYTEHYTPYIVDDTTLQGTGQLPKFAEDLFHVTRGGDETKTTQYLIPTAEVTLTNTVADSIIPSEQLPLKLTAHSPCFRSEAGSYGKDTRGLIRQHQFDKVEMVQIVHPEKSYETLEEMVGHAENILKALELPYRVITLCTGDMGFGAAKTYDLEVWVPAQNTYREISSCSNCEDFQARRMKARFKDENGKNRLVHTLNGSGLAVGRTLVAVLENHQNADGSINIPAALQPYMGGVAKLEVK.

237-239 (TAE) contributes to the L-serine binding site. Residue 268–270 (RSE) participates in ATP binding. Glu-291 contacts L-serine. 355-358 (EISS) serves as a coordination point for ATP. An L-serine-binding site is contributed by Ser-390.

Belongs to the class-II aminoacyl-tRNA synthetase family. Type-1 seryl-tRNA synthetase subfamily. In terms of assembly, homodimer. The tRNA molecule binds across the dimer.

The protein resides in the cytoplasm. The catalysed reaction is tRNA(Ser) + L-serine + ATP = L-seryl-tRNA(Ser) + AMP + diphosphate + H(+). It catalyses the reaction tRNA(Sec) + L-serine + ATP = L-seryl-tRNA(Sec) + AMP + diphosphate + H(+). The protein operates within aminoacyl-tRNA biosynthesis; selenocysteinyl-tRNA(Sec) biosynthesis; L-seryl-tRNA(Sec) from L-serine and tRNA(Sec): step 1/1. Functionally, catalyzes the attachment of serine to tRNA(Ser). Is also able to aminoacylate tRNA(Sec) with serine, to form the misacylated tRNA L-seryl-tRNA(Sec), which will be further converted into selenocysteinyl-tRNA(Sec). The chain is Serine--tRNA ligase from Neisseria meningitidis serogroup C (strain 053442).